The following is a 585-amino-acid chain: Protein NRT1/ PTR FAMILY 8.3 (585 aa).

Glycine 2 carries the post-translational modification N-acetylglycine. Residues tryptophan 91 to glycine 111 traverse the membrane as a helical segment. Residue threonine 115 is modified to Phosphothreonine. The next 10 helical transmembrane spans lie at isoleucine 116 to valine 136, proline 154 to isoleucine 174, phenylalanine 200 to valine 220, tryptophan 228 to phenylalanine 248, phenylalanine 351 to phenylalanine 371, leucine 387 to tyrosine 407, methionine 431 to isoleucine 451, valine 472 to glycine 492, alanine 511 to valine 531, and phenylalanine 556 to alanine 576.

It belongs to the major facilitator superfamily. Proton-dependent oligopeptide transporter (POT/PTR) (TC 2.A.17) family. As to expression, highly expressed in young leaves, roots and germinating seeds, intermediately in stems, flowers and mature leaves and at low level in siliques.

Its subcellular location is the vacuole membrane. Its activity is regulated as follows. Inhibited by leucyl-ethionine. Functionally, peptide transporter. Mediates the transport of di- and tripeptides. High affinity, low capacity transporter. Can also transport histidine. This Arabidopsis thaliana (Mouse-ear cress) protein is Protein NRT1/ PTR FAMILY 8.3 (NPF8.3).